The following is a 205-amino-acid chain: ATP-dependent Clp protease proteolytic subunit (205 aa).

The Nucleophile role is filled by Ser101. His126 is a catalytic residue.

It belongs to the peptidase S14 family. Component of the chloroplastic Clp protease core complex.

It is found in the plastid. The protein localises to the chloroplast stroma. The enzyme catalyses Hydrolysis of proteins to small peptides in the presence of ATP and magnesium. alpha-casein is the usual test substrate. In the absence of ATP, only oligopeptides shorter than five residues are hydrolyzed (such as succinyl-Leu-Tyr-|-NHMec, and Leu-Tyr-Leu-|-Tyr-Trp, in which cleavage of the -Tyr-|-Leu- and -Tyr-|-Trp bonds also occurs).. Its function is as follows. Cleaves peptides in various proteins in a process that requires ATP hydrolysis. Has a chymotrypsin-like activity. Plays a major role in the degradation of misfolded proteins. This Pinus contorta (Shore pine) protein is ATP-dependent Clp protease proteolytic subunit.